Consider the following 270-residue polypeptide: Glucosamine-6-phosphate deaminase (270 aa).

Aspartate 72 functions as the Proton acceptor; for enolization step in the catalytic mechanism. The active-site For ring-opening step is the aspartate 141. Histidine 143 serves as the catalytic Proton acceptor; for ring-opening step. Residue glutamate 148 is the For ring-opening step of the active site.

Belongs to the glucosamine/galactosamine-6-phosphate isomerase family. NagB subfamily.

It carries out the reaction alpha-D-glucosamine 6-phosphate + H2O = beta-D-fructose 6-phosphate + NH4(+). The protein operates within amino-sugar metabolism; N-acetylneuraminate degradation; D-fructose 6-phosphate from N-acetylneuraminate: step 5/5. Allosterically activated by N-acetylglucosamine 6-phosphate (GlcNAc6P). Its function is as follows. Catalyzes the reversible isomerization-deamination of glucosamine 6-phosphate (GlcN6P) to form fructose 6-phosphate (Fru6P) and ammonium ion. The protein is Glucosamine-6-phosphate deaminase of Parabacteroides distasonis (strain ATCC 8503 / DSM 20701 / CIP 104284 / JCM 5825 / NCTC 11152).